Consider the following 669-residue polypeptide: MGKIKELQTSLANKIAAGEVVERPSSVVKELLENAIDAGATEISIEVEESGVQSIRVVDNGSGIEAEDLGLVFHRHATSKLDQDEDLFHIRTLGFRGEALASISSVAKVTLKTCTDNANGNEIYVENGEILNHKPAKAKKGTDILVESLFYNTPARLKYIKSLYTELGKITDIVNRMAMSHPDIRIALISDGKTMLSTNGSGRTNEVMAEIYGMKVARDLVHISGDTSDYHIEGFVAKPEHSRSNKHYISIFINGRYIKNFMLNKAILEGYHTLLTIGRFPICYINIEMDPILVDVNVHPTKLEVRLSKEEQLYQLIVSKIQEAFKDRILIPKNNLDYVPKKNKVLHSFEQQKIEFEQRQNTENNQEKTFSSEESNSKPFMVENQNDEIVIREDSYNPFVTKTSESLIADDESSGYNNTREKDEDYFKKQQEILQEMDQTFDSNDDTSVQNYENKASDDYYDVNDIKGTKSKDPKRRIPYMEIVGQVHGTYIIAQNEFGMYMIDQHAAQERIKYEYFRDKIGEVTNEVQDLLIPLTFHFSKDEQLVIDQYKNELQQVGIMLEHFGGHDYIVSSYPVWFPKDEVEEIIKDMIELILEEKKVDIKKLREDVAIMMSCKKSIKANHYLQKHEMSDLIDQLREAEDPFTCPHGRPIIINFSKYELEKLFKRVM.

The segment at 356-377 (FEQRQNTENNQEKTFSSEESNS) is disordered. Residues 361 to 377 (NTENNQEKTFSSEESNS) show a composition bias toward polar residues.

This sequence belongs to the DNA mismatch repair MutL/HexB family.

In terms of biological role, this protein is involved in the repair of mismatches in DNA. It is required for dam-dependent methyl-directed DNA mismatch repair. May act as a 'molecular matchmaker', a protein that promotes the formation of a stable complex between two or more DNA-binding proteins in an ATP-dependent manner without itself being part of a final effector complex. The protein is DNA mismatch repair protein MutL of Staphylococcus aureus (strain MSSA476).